We begin with the raw amino-acid sequence, 276 residues long: Large ribosomal subunit protein uL2 (276 aa).

2 disordered regions span residues 37–59 (QIQK…GGHK) and 225–276 (VMNP…RHKR). Polar residues predominate over residues 39–49 (QKSGRNNNGHI). Positions 50–59 (TTRHKGGGHK) are enriched in basic residues.

This sequence belongs to the universal ribosomal protein uL2 family. In terms of assembly, part of the 50S ribosomal subunit. Forms a bridge to the 30S subunit in the 70S ribosome.

One of the primary rRNA binding proteins. Required for association of the 30S and 50S subunits to form the 70S ribosome, for tRNA binding and peptide bond formation. It has been suggested to have peptidyltransferase activity; this is somewhat controversial. Makes several contacts with the 16S rRNA in the 70S ribosome. The sequence is that of Large ribosomal subunit protein uL2 from Ralstonia pickettii (strain 12J).